The sequence spans 539 residues: CTP synthase (539 aa).

The tract at residues 1 to 268 (MSFKSIFLTG…SDFLLNKLGF (268 aa)) is amidoligase domain. Position 14 (Ser-14) interacts with CTP. Residue Ser-14 participates in UTP binding. ATP is bound at residue 15-20 (SLGKGL). Tyr-55 contributes to the L-glutamine binding site. Asp-72 contacts ATP. Positions 72 and 142 each coordinate Mg(2+). CTP contacts are provided by residues 149–151 (DIE), 188–193 (KTKPTQ), and Lys-224. UTP is bound by residues 188-193 (KTKPTQ) and Lys-224. A Glutamine amidotransferase type-1 domain is found at 294-532 (RIGLVGKYLE…IRAAKAYSLE (239 aa)). Gly-353 serves as a coordination point for L-glutamine. Cys-380 serves as the catalytic Nucleophile; for glutamine hydrolysis. L-glutamine-binding positions include 381–384 (LGMQ), Glu-404, and Arg-460. Residues His-505 and Glu-507 contribute to the active site.

The protein belongs to the CTP synthase family. As to quaternary structure, homotetramer.

It catalyses the reaction UTP + L-glutamine + ATP + H2O = CTP + L-glutamate + ADP + phosphate + 2 H(+). It carries out the reaction L-glutamine + H2O = L-glutamate + NH4(+). The catalysed reaction is UTP + NH4(+) + ATP = CTP + ADP + phosphate + 2 H(+). Its pathway is pyrimidine metabolism; CTP biosynthesis via de novo pathway; CTP from UDP: step 2/2. Allosterically activated by GTP, when glutamine is the substrate; GTP has no effect on the reaction when ammonia is the substrate. The allosteric effector GTP functions by stabilizing the protein conformation that binds the tetrahedral intermediate(s) formed during glutamine hydrolysis. Inhibited by the product CTP, via allosteric rather than competitive inhibition. Functionally, catalyzes the ATP-dependent amination of UTP to CTP with either L-glutamine or ammonia as the source of nitrogen. Regulates intracellular CTP levels through interactions with the four ribonucleotide triphosphates. This is CTP synthase from Chlamydia trachomatis serovar L2 (strain ATCC VR-902B / DSM 19102 / 434/Bu).